The chain runs to 177 residues: Large ribosomal subunit protein uL6 (177 aa).

It belongs to the universal ribosomal protein uL6 family. Part of the 50S ribosomal subunit.

Its function is as follows. This protein binds to the 23S rRNA, and is important in its secondary structure. It is located near the subunit interface in the base of the L7/L12 stalk, and near the tRNA binding site of the peptidyltransferase center. The polypeptide is Large ribosomal subunit protein uL6 (Azoarcus sp. (strain BH72)).